Consider the following 690-residue polypeptide: Amino-acid acetyltransferase, mitochondrial (690 aa).

The tract at residues 62 to 93 (RFPSVKKPKPPIPRQNQGAVETQSGKENEKPG) is disordered. Over residues 75 to 84 (RQNQGAVETQ) the composition is skewed to polar residues. An N-acetyltransferase domain is found at 508 to 679 (DGHHLTLDDP…DYEAVCRSIQ (172 aa)).

This sequence belongs to the acetyltransferase family.

It localises to the mitochondrion. The enzyme catalyses L-glutamate + acetyl-CoA = N-acetyl-L-glutamate + CoA + H(+). The protein operates within amino-acid biosynthesis; L-arginine biosynthesis; N(2)-acetyl-L-ornithine from L-glutamate: step 1/4. In terms of biological role, N-acetylglutamate synthase involved in arginine biosynthesis. This chain is Amino-acid acetyltransferase, mitochondrial (arg2), found in Talaromyces stipitatus (strain ATCC 10500 / CBS 375.48 / QM 6759 / NRRL 1006) (Penicillium stipitatum).